The primary structure comprises 1192 residues: Methionine synthase (1192 aa).

In terms of domain architecture, Hcy-binding spans 1–312 (MTAADKHLYD…AHIREVAAAV (312 aa)). Zn(2+) contacts are provided by Cys231, Cys297, and Cys298. The 259-residue stretch at 343–601 (VLVIGERTNA…RIPEEQRNVA (259 aa)) folds into the Pterin-binding domain. Residues 635–728 (RLAELAGLPL…HMERSDDDSG (94 aa)) enclose the B12-binding N-terminal domain. The 138-residue stretch at 729–866 (KGRIVLATVK…SAKRGEAPDE (138 aa)) folds into the B12-binding domain. Methylcob(III)alamin-binding positions include 739-743 (GDVHD), His742, Ser787, and Ala845. The segment at 860–904 (RGEAPDENSPEAIKAREKEAERKARHQRSKRIAAQRKAAEEPVEV) is disordered. A compositionally biased stretch (basic and acidic residues) spans 872-881 (IKAREKEAER). Residues 882-893 (KARHQRSKRIAA) are compositionally biased toward basic residues. Residues 893–1192 (AQRKAAEEPV…HHPEAKYFNV (300 aa)) form the AdoMet activation domain. S-adenosyl-L-methionine contacts are provided by residues Asp940, Arg1135, and 1189–1190 (YF).

This sequence belongs to the vitamin-B12 dependent methionine synthase family. Methylcob(III)alamin serves as cofactor. The cofactor is Zn(2+).

It catalyses the reaction (6S)-5-methyl-5,6,7,8-tetrahydrofolate + L-homocysteine = (6S)-5,6,7,8-tetrahydrofolate + L-methionine. It functions in the pathway amino-acid biosynthesis; L-methionine biosynthesis via de novo pathway; L-methionine from L-homocysteine (MetH route): step 1/1. Its function is as follows. Catalyzes the transfer of a methyl group from methyl-cobalamin to homocysteine, yielding enzyme-bound cob(I)alamin and methionine. Subsequently, remethylates the cofactor using methyltetrahydrofolate. The chain is Methionine synthase (metH) from Mycobacterium tuberculosis (strain ATCC 25618 / H37Rv).